A 489-amino-acid polypeptide reads, in one-letter code: Lysine--tRNA ligase (489 aa).

Residues Glu399 and Glu406 each coordinate Mg(2+).

This sequence belongs to the class-II aminoacyl-tRNA synthetase family. Homodimer. Requires Mg(2+) as cofactor.

Its subcellular location is the cytoplasm. It catalyses the reaction tRNA(Lys) + L-lysine + ATP = L-lysyl-tRNA(Lys) + AMP + diphosphate. The sequence is that of Lysine--tRNA ligase from Roseiflexus sp. (strain RS-1).